A 764-amino-acid chain; its full sequence is Putative alpha-1,3-mannosyltransferase MNN13 (764 aa).

The Cytoplasmic portion of the chain corresponds to 1-13; that stretch reads MIKPILGTKKIRR. Residues 14–34 traverse the membrane as a helical segment; that stretch reads VICIIIGLFCILLLIGIFKHN. Topologically, residues 35–764 are lumenal; it reads STNSVNNEAS…YLGDVWVGKY (730 aa). 2 N-linked (GlcNAc...) asparagine glycosylation sites follow: Asn45 and Asn204.

It belongs to the MNN1/MNT family.

It localises to the golgi apparatus membrane. Its pathway is protein modification; protein glycosylation. Its function is as follows. Responsible for addition of the terminal mannose residues to the outer chain of core N-linked polysaccharides and to O-linked mannotriose. Implicated in late Golgi modifications. In Candida albicans (strain SC5314 / ATCC MYA-2876) (Yeast), this protein is Putative alpha-1,3-mannosyltransferase MNN13 (MNN13).